The sequence spans 466 residues: Probable periplasmic serine protease do/HhoA-like (466 aa).

An N-terminal signal peptide occupies residues 1–29; that stretch reads MKKTRFVLNSIALGLSVLSTSFVAHVAQA. Active-site charge relay system residues include H120, D150, and S226. 2 PDZ domains span residues 270 to 361 and 367 to 458; these read ILEF…LRDG and KMKL…LRGD.

This sequence belongs to the peptidase S1C family.

It is found in the periplasm. The polypeptide is Probable periplasmic serine protease do/HhoA-like (Haemophilus influenzae (strain ATCC 51907 / DSM 11121 / KW20 / Rd)).